Reading from the N-terminus, the 1014-residue chain is Endogenous retrovirus group K member 10 Pol protein (1014 aa).

The region spanning 57-245 (LEKGHIEPSF…TPFHYLGMQI (189 aa)) is the Reverse transcriptase domain. Residues 161–164 (LPQG) carry the LPQG motif. A YXDD motif is present at residues 195 to 198 (YIDD). The RNase H type-1 domain maps to 460–590 (LENALTVFTD…ADLLVSSALI (131 aa)). Mg(2+)-binding residues include aspartate 469, glutamate 497, aspartate 517, and aspartate 582. The Integrase-type zinc-finger motif lies at 587 to 628 (SALIKAQELHALTHVNAAGLKNKFDVTWKQAKDIVQHCTQCQ). Positions 596, 600, 624, and 627 each coordinate Zn(2+). In terms of domain architecture, Integrase catalytic spans 642-803 (RGLCPNALWQ…TSAEQHLTGK (162 aa)). Positions 811-859 (KLIWWKDNKNKTWEIGKVITWGRGFACVSPGENQLPVWLPTRHLKFYNE) form a DNA-binding region, integrase-type.

Belongs to the beta type-B retroviral polymerase family. HERV class-II K(HML-2) pol subfamily.

The enzyme catalyses DNA(n) + a 2'-deoxyribonucleoside 5'-triphosphate = DNA(n+1) + diphosphate. It catalyses the reaction Endonucleolytic cleavage to 5'-phosphomonoester.. In terms of biological role, early post-infection, the reverse transcriptase converts the viral RNA genome into double-stranded viral DNA. The RNase H domain of the reverse transcriptase performs two functions. It degrades the RNA template and specifically removes the RNA primer from the RNA/DNA hybrid. Following nuclear import, the integrase catalyzes the insertion of the linear, double-stranded viral DNA into the host cell chromosome. Endogenous Pol proteins may have kept, lost or modified their original function during evolution. In Homo sapiens (Human), this protein is Endogenous retrovirus group K member 10 Pol protein (ERVK-10).